Reading from the N-terminus, the 637-residue chain is Probable serine/threonine-protein kinase DDB_G0283065 (637 aa).

Disordered regions lie at residues 36–88 (NNNN…KFNR) and 155–234 (NSNN…RFNN). Low complexity predominate over residues 53 to 85 (NNSTTKSIDNNNNNTNNSNSNNNNNDNIKNNNK). One can recognise a Protein kinase domain in the interval 236–629 (FNDVRVLGKG…NQISTDYDNF (394 aa)). ATP is bound by residues 242 to 250 (LGKGGFGIV) and Lys-265. Asp-479 serves as the catalytic Proton acceptor.

This sequence belongs to the protein kinase superfamily. Ser/Thr protein kinase family. GCN2 subfamily.

It carries out the reaction L-seryl-[protein] + ATP = O-phospho-L-seryl-[protein] + ADP + H(+). The catalysed reaction is L-threonyl-[protein] + ATP = O-phospho-L-threonyl-[protein] + ADP + H(+). This Dictyostelium discoideum (Social amoeba) protein is Probable serine/threonine-protein kinase DDB_G0283065.